Reading from the N-terminus, the 297-residue chain is MGNIFHIPVLLEEIINLLEASNISDGFVFVDCTLGEGGHSSAVLKKYQNINVIGIDRDDVVLNRAKESLIEFKGRVSYFNTWFDDFFSEYPLSSKINFILADLGISMFHYKMSGRGFSFFEDERLDMRLYPGAGGLSAYDIINTFDKKRLENLIYELSGERYSRRIVKSILEYRKIKKIETPRELQDIVSKAYPRIKLKINPATKTFQALRIYVNDELFRLKRSLPLWVESLSNNGVLAIVTFHSLEDKIVKEFFKGLSKDQYCILTKKPIMPRCEEKRFNSASRSAKLRVIKKLYE.

Residues 37–39 (GGH), Asp-56, Phe-87, Asp-102, and His-109 each bind S-adenosyl-L-methionine.

Belongs to the methyltransferase superfamily. RsmH family.

It is found in the cytoplasm. The catalysed reaction is cytidine(1402) in 16S rRNA + S-adenosyl-L-methionine = N(4)-methylcytidine(1402) in 16S rRNA + S-adenosyl-L-homocysteine + H(+). Specifically methylates the N4 position of cytidine in position 1402 (C1402) of 16S rRNA. In Borrelia turicatae (strain 91E135), this protein is Ribosomal RNA small subunit methyltransferase H.